The chain runs to 318 residues: Solute carrier family 25 member 34 (318 aa).

Solcar repeat units follow at residues 18 to 111, 115 to 208, and 218 to 309; these read VSPA…ACQA, QQPG…AKAW, and DSWL…LRKL. 6 consecutive transmembrane segments (helical) span residues 21–41, 59–79, 112–134, 184–205, 220–240, and 292–315; these read AVDL…TNPL, TYPR…RADG, GLTQ…GAFV, VGAA…FTSA, WLAT…VMAP, and LGPH…RAQH.

This sequence belongs to the mitochondrial carrier (TC 2.A.29) family.

Its subcellular location is the mitochondrion inner membrane. The enzyme catalyses a dicarboxylate(in) + sulfate(out) = a dicarboxylate(out) + sulfate(in). In terms of biological role, putative antiporter that exchanges dicarboxylates and sulfur oxoanions across the inner membrane of mitochondria. This Rattus norvegicus (Rat) protein is Solute carrier family 25 member 34 (Slc25a34).